The chain runs to 147 residues: Large ribosomal subunit protein uL15 (147 aa).

The interval 1 to 58 is disordered; the sequence is MRLHDLKPAEGSTKKKKRVGRGIGSGHGKTSGRGHKGQNARSGGGVRPGFEGGQMPLT. Over residues 42–52 the composition is skewed to gly residues; it reads SGGGVRPGFEG.

This sequence belongs to the universal ribosomal protein uL15 family. As to quaternary structure, part of the 50S ribosomal subunit.

Functionally, binds to the 23S rRNA. This Caldanaerobacter subterraneus subsp. tengcongensis (strain DSM 15242 / JCM 11007 / NBRC 100824 / MB4) (Thermoanaerobacter tengcongensis) protein is Large ribosomal subunit protein uL15.